The following is a 218-amino-acid chain: Adenylate kinase (218 aa).

G10–T15 contacts ATP. The tract at residues S30–V59 is NMP. AMP is bound by residues T31, R36, G57–V59, G85–R88, and Q92. The LID stretch occupies residues G122–D159. ATP-binding positions include R123 and T132 to Y133. AMP is bound by residues R156 and R167. An ATP-binding site is contributed by G203.

This sequence belongs to the adenylate kinase family. Monomer.

It localises to the cytoplasm. It catalyses the reaction AMP + ATP = 2 ADP. Its pathway is purine metabolism; AMP biosynthesis via salvage pathway; AMP from ADP: step 1/1. Functionally, catalyzes the reversible transfer of the terminal phosphate group between ATP and AMP. Plays an important role in cellular energy homeostasis and in adenine nucleotide metabolism. This chain is Adenylate kinase, found in Laribacter hongkongensis (strain HLHK9).